A 250-amino-acid chain; its full sequence is Phosphoribosylaminoimidazole-succinocarboxamide synthase (250 aa).

It belongs to the SAICAR synthetase family.

It catalyses the reaction 5-amino-1-(5-phospho-D-ribosyl)imidazole-4-carboxylate + L-aspartate + ATP = (2S)-2-[5-amino-1-(5-phospho-beta-D-ribosyl)imidazole-4-carboxamido]succinate + ADP + phosphate + 2 H(+). It participates in purine metabolism; IMP biosynthesis via de novo pathway; 5-amino-1-(5-phospho-D-ribosyl)imidazole-4-carboxamide from 5-amino-1-(5-phospho-D-ribosyl)imidazole-4-carboxylate: step 1/2. This is Phosphoribosylaminoimidazole-succinocarboxamide synthase from Bifidobacterium longum (strain DJO10A).